The following is a 456-amino-acid chain: Asparagine--tRNA ligase (456 aa).

Belongs to the class-II aminoacyl-tRNA synthetase family. In terms of assembly, homodimer.

Its subcellular location is the cytoplasm. The enzyme catalyses tRNA(Asn) + L-asparagine + ATP = L-asparaginyl-tRNA(Asn) + AMP + diphosphate + H(+). In Mycoplasmoides gallisepticum (strain R(low / passage 15 / clone 2)) (Mycoplasma gallisepticum), this protein is Asparagine--tRNA ligase.